The chain runs to 143 residues: Transcriptional regulator MraZ (143 aa).

2 consecutive SpoVT-AbrB domains span residues 5 to 47 (EYQH…PQEE) and 76 to 119 (ASEC…SKSE).

Belongs to the MraZ family. In terms of assembly, forms oligomers.

Its subcellular location is the cytoplasm. The protein localises to the nucleoid. In Listeria monocytogenes serotype 4b (strain CLIP80459), this protein is Transcriptional regulator MraZ.